Reading from the N-terminus, the 428-residue chain is C4-dicarboxylate transport protein (428 aa).

9 helical membrane-spanning segments follow: residues Ser8–Pro28, Leu44–Met64, Val76–Val96, Ile142–Phe162, Val184–Met204, Leu222–Ala242, Val289–Leu309, Ile326–Val346, and Ile352–Ile372.

The protein belongs to the dicarboxylate/amino acid:cation symporter (DAACS) (TC 2.A.23) family.

It localises to the cell inner membrane. Responsible for the transport of dicarboxylates such as succinate, fumarate, and malate from the periplasm across the membrane. The protein is C4-dicarboxylate transport protein of Klebsiella pneumoniae (strain 342).